The following is a 477-amino-acid chain: Pentatricopeptide repeat-containing protein At4g14170 (477 aa).

PPR repeat units follow at residues 65–96 (NVVL…MPYR), 97–131 (NIFS…SCVR), 133–167 (DDFT…GFSS), 168–198 (SLFV…MPVR), 199–233 (DSVL…GFAL), 234–264 (DSVV…CIRR), 269–299 (GLNL…MSRR), 300–334 (DVIS…GIEP), 335–369 (NAVT…NIVP), and 370–400 (ELKH…MPVK). Residues 405 to 477 (VMGAVLSGCK…ISKVPGCSSI (73 aa)) form a type E motif; degenerate region.

Belongs to the PPR family. PCMP-E subfamily.

In Arabidopsis thaliana (Mouse-ear cress), this protein is Pentatricopeptide repeat-containing protein At4g14170 (PCMP-E17).